The sequence spans 639 residues: ATP-dependent zinc metalloprotease FtsH (639 aa).

The Cytoplasmic portion of the chain corresponds to 1-15; the sequence is MDNEKQASPPPAAPP. Residues 16-36 traverse the membrane as a helical segment; sequence LNWRYLLWIILLGIFLISWLG. At 37–123 the chain is on the periplasmic side; that stretch reads NAGRQAGDEI…VQAKSEEPSL (87 aa). The helical transmembrane segment at 124-144 threads the bilayer; sequence WMQAIIGILPWFLILGLIFYV. Residues 145–639 lie on the Cytoplasmic side of the membrane; that stretch reads SYRMQQRMMG…HNEAVATGAG (495 aa). Residue 221–228 coordinates ATP; it reads GRPGTGKT. Position 442 (H442) interacts with Zn(2+). E443 is an active-site residue. Positions 446 and 518 each coordinate Zn(2+).

In the central section; belongs to the AAA ATPase family. This sequence in the C-terminal section; belongs to the peptidase M41 family. As to quaternary structure, homohexamer. Zn(2+) serves as cofactor.

It is found in the cell inner membrane. Functionally, acts as a processive, ATP-dependent zinc metallopeptidase for both cytoplasmic and membrane proteins. Plays a role in the quality control of integral membrane proteins. The sequence is that of ATP-dependent zinc metalloprotease FtsH from Nitrosococcus oceani (strain ATCC 19707 / BCRC 17464 / JCM 30415 / NCIMB 11848 / C-107).